We begin with the raw amino-acid sequence, 511 residues long: Maturase K (511 aa).

Belongs to the intron maturase 2 family. MatK subfamily.

It is found in the plastid. Its subcellular location is the chloroplast. Its function is as follows. Usually encoded in the trnK tRNA gene intron. Probably assists in splicing its own and other chloroplast group II introns. This chain is Maturase K, found in Lolium perenne (Perennial ryegrass).